A 603-amino-acid chain; its full sequence is Penicillin-binding protein activator LpoA (603 aa).

Residues 1–24 (MINHKRLSVPRILTPVALAITLAA) form the signal peptide. Residue Cys-25 is the site of N-palmitoyl cysteine attachment. Cys-25 carries S-diacylglycerol cysteine lipidation.

Belongs to the LpoA family. Interacts with PBP1a.

It localises to the cell outer membrane. Its function is as follows. Regulator of peptidoglycan synthesis that is essential for the function of penicillin-binding protein 1A (PBP1a). The protein is Penicillin-binding protein activator LpoA of Vibrio antiquarius (strain Ex25).